Consider the following 50-residue polypeptide: Photosystem II reaction center protein M (50 aa).

A helical transmembrane segment spans residues 7 to 27 (GFVASLLFVGVPTIFLIGLFI).

The protein belongs to the PsbM family. In terms of assembly, PSII is composed of 1 copy each of membrane proteins PsbA, PsbB, PsbC, PsbD, PsbE, PsbF, PsbH, PsbI, PsbJ, PsbK, PsbL, PsbM, PsbT, PsbX, PsbY, Psb30/Ycf12, peripheral proteins PsbO, CyanoQ (PsbQ), PsbU, PsbV and a large number of cofactors. It forms dimeric complexes.

The protein localises to the cellular thylakoid membrane. In terms of biological role, one of the components of the core complex of photosystem II (PSII). PSII is a light-driven water:plastoquinone oxidoreductase that uses light energy to abstract electrons from H(2)O, generating O(2) and a proton gradient subsequently used for ATP formation. It consists of a core antenna complex that captures photons, and an electron transfer chain that converts photonic excitation into a charge separation. This subunit is found at the monomer-monomer interface. The polypeptide is Photosystem II reaction center protein M (Prochlorococcus marinus (strain MIT 9515)).